The chain runs to 607 residues: Type 3 secretion system secretin (607 aa).

The N-terminal stretch at 1–33 (MAPACTTAHRRRAPLAAVLMLSLLPLLSPHADA) is a signal peptide. The segment at 277–332 (ASSSDRVPVSPPLPGSGAAAAAGSPASVWPELSKGRRDESNPIDAGGGAELASDAP) is disordered. Positions 291–306 (GSGAAAAAGSPASVWP) are enriched in low complexity.

It belongs to the bacterial secretin family. T3SS SctC subfamily. As to quaternary structure, the core secretion machinery of the T3SS is composed of approximately 20 different proteins, including cytoplasmic components, a base, an export apparatus and a needle. This subunit is part of the base, which anchors the injectisome in the bacterial cell envelope. Forms a stable homooligomeric complex.

Its subcellular location is the cell outer membrane. In terms of biological role, component of the type III secretion system (T3SS), also called injectisome, which is used to inject bacterial effector proteins into eukaryotic host cells. Forms a ring-shaped multimeric structure with an apparent central pore in the outer membrane. Necessary for both basic pathogenicity and the induction of the hypersensitive response in resistant plants. In Xanthomonas euvesicatoria, this protein is Type 3 secretion system secretin.